The primary structure comprises 343 residues: N-acetyl-gamma-glutamyl-phosphate reductase (343 aa).

Cysteine 148 is a catalytic residue.

The protein belongs to the NAGSA dehydrogenase family. Type 1 subfamily.

Its subcellular location is the cytoplasm. The enzyme catalyses N-acetyl-L-glutamate 5-semialdehyde + phosphate + NADP(+) = N-acetyl-L-glutamyl 5-phosphate + NADPH + H(+). It functions in the pathway amino-acid biosynthesis; L-arginine biosynthesis; N(2)-acetyl-L-ornithine from L-glutamate: step 3/4. In terms of biological role, catalyzes the NADPH-dependent reduction of N-acetyl-5-glutamyl phosphate to yield N-acetyl-L-glutamate 5-semialdehyde. The sequence is that of N-acetyl-gamma-glutamyl-phosphate reductase from Caldicellulosiruptor saccharolyticus (strain ATCC 43494 / DSM 8903 / Tp8T 6331).